The primary structure comprises 696 residues: Potassium voltage-gated channel subfamily KQT member 4 (696 aa).

Residues 1–20 (MAEAPPRRLGLGPPPGDAPR) are disordered. The Cytoplasmic segment spans residues 1 to 97 (MAEAPPRRLG…VYNVLERPRG (97 aa)). Arg-94 is a binding site for a 1,2-diacyl-sn-glycero-3-phospho-(1D-myo-inositol-4,5-bisphosphate). A helical transmembrane segment spans residues 98-119 (WAFVYHVFIFLLVFSCLVLSVL). The Extracellular segment spans residues 120–130 (STIQEHQELAN). A helical membrane pass occupies residues 131 to 153 (ECLLILEFVMIVVFGLEYIIRVW). Topologically, residues 154 to 169 (SAGCCCRYRGWQGRFR) are cytoplasmic. Residues 170–192 (FARKPFCVIDFIVFVASVAVIAA) form a helical membrane-spanning segment. A 1,2-diacyl-sn-glycero-3-phospho-(1D-myo-inositol-4,5-bisphosphate) is bound at residue Lys-173. At 193–203 (GTQGNIFATSA) the chain is on the extracellular side. A helical; Voltage-sensor transmembrane segment spans residues 204-224 (LRSMRFLQILRMVRMDRRGGT). Residues Arg-220, Arg-221, Lys-226, and Ser-236 each coordinate a 1,2-diacyl-sn-glycero-3-phospho-(1D-myo-inositol-4,5-bisphosphate). Topologically, residues 225 to 236 (WKLLGSVVYAHS) are cytoplasmic. The chain crosses the membrane as a helical span at residues 237 to 259 (KELITAWYIGFLVLIFASFLVYL). Over 260 to 271 (AEKDANSDFSSY) the chain is Extracellular. Residues 272–293 (ADSLWWGTITLTTIGYGDKTPH) constitute an intramembrane region (pore-forming). A topological domain (extracellular) is located at residue Thr-294. The helical transmembrane segment at 295 to 323 (WLGRVLAAGFALLGISFFALPAGILGSGF) threads the bilayer. At 324–696 (ALKVQEQHRQ…ISRSVSTNMD (373 aa)) the chain is on the cytoplasmic side. A 1,2-diacyl-sn-glycero-3-phospho-(1D-myo-inositol-4,5-bisphosphate) contacts are provided by His-331 and Lys-334. The interval 343-352 (AANLIQAAWR) is interaction with CALM. The disordered stretch occupies residues 445-484 (SSQKRTGPSKQHLAPPPIPTSPSSEQVGEASSPSKVQKSW). Residues 465–484 (SPSSEQVGEASSPSKVQKSW) are compositionally biased toward polar residues. The interval 536-550 (RSVRILKFLVAKRKF) is interaction with CALM. Positions 547-651 (KRKFKETLRP…SRCLRSGTSA (105 aa)) are C-terminal assembly domain (tetramerization). A disordered region spans residues 589–609 (GRGPGDRKTREKGDKGPSDTE). A compositionally biased stretch (basic and acidic residues) spans 592–606 (PGDRKTREKGDKGPS). Residues 610-645 (AVDEISMMGRVVKVEKQVQSIEHKLDLLLGFYSRCL) adopt a coiled-coil conformation.

This sequence belongs to the potassium channel family. KQT (TC 1.A.1.15) subfamily. Kv7.4/KCNQ4 sub-subfamily. In terms of assembly, homotetramer. Interacts (via C-terminus) with calmodulin; forms a heterooctameric structure (with 4:4 KCNQ1:CALM stoichiometry); the interaction is calcium-independent, constitutive, participates in the proper assembly of a functional channel. The interaction with calcium-free CALM controls channel trafficking whereas interaction with calcium-bound CALM regulates channel gating. May form a functional heteromultimeric channel with KCNQ3. Interacts with HSP90AB1; promotes cell surface expression of KCNQ4. As to expression, in the inner ear expressed in the outer sensory hair cells of the cochlea and in type I hair cells of the vestibular organs. Also expressed in the postsynaptic membrane of the calyx nerve endings innervating type I cells. In the brain expressed in neurons of many, but not all, nuclei of the central auditory pathway. Absent from most other brain regions.

It localises to the basal cell membrane. It catalyses the reaction K(+)(in) = K(+)(out). With respect to regulation, two molecules of phosphatidylinositol-4,5-bisphosphate (PIP2-I and PIP2-II) are essential to activate KCNQ4 channel by inducing the coupling of the voltage-sensing domain (VSD) and the pore-forming domain (PD). Upon channel activation, PIP2-I and PIP2-II disrupt the VSD-calmodulin/CALM interaction, causing the release of CALM from the VSD which triggers the opening of the gate. Calcium suppresses KCNQ4 channel current through calcium-bound CALM C-terminus. Therefore CALM acts as calcium sensor that controls channel activity. Pore-forming subunit of the voltage-gated potassium (Kv) channel involved in the regulation of sensory cells excitability in the cochlea. KCNQ4/Kv7.4 channel is composed of 4 pore-forming subunits assembled as tetramers. Promotes the outflow of potassium ions in the repolarization phase of action potential which plays a role in regulating membrane potential of excitable cells. The channel conducts a slowly activating and deactivating current. Current often shows some inward rectification at positive potentials. Channel may be selectively permeable in vitro to other cations besides potassium, in decreasing order of affinity K(+) = Rb(+) &gt; Cs(+) &gt; Na(+). Important for normal physiological function of inner ear such as sensory perception of sound. The polypeptide is Potassium voltage-gated channel subfamily KQT member 4 (Mus musculus (Mouse)).